Consider the following 394-residue polypeptide: Myb-related protein 2 (394 aa).

The region spanning 42–102 is the HTH myb-type domain; it reads TDAKPRLKWT…HLQKYRLSKN (61 aa). The segment at residues 73–98 is a DNA-binding region (H-T-H motif); that stretch reads PKTIMKVMGIPGLTLYHLKSHLQKYR. The coiled coil stretch occupies residues 148 to 168; sequence GEALQMQIEVQRRLHEQLEVQ. The LHEQLE motif lies at 161–166; sequence LHEQLE. The tract at residues 338 to 363 is disordered; it reads LHGHKSQHQQGNNEDHKLETRNRKGM. Over residues 350–363 the composition is skewed to basic and acidic residues; sequence NEDHKLETRNRKGM.

The protein belongs to the MYB-CC family. As to quaternary structure, isoform 1: Homodimer. Isoform 3: Does not form homodimer. In terms of tissue distribution, expressed in phloem and/or cambium.

It localises to the nucleus. Its function is as follows. Transcriptional activator that may activate the transcription of specific genes involved in nitrogen uptake or assimilation. Acts redundantly with MYR1 as a repressor of flowering and organ elongation under decreased light intensity. Represses gibberellic acid (GA)-dependent responses and affects levels of bioactive GA. The chain is Myb-related protein 2 from Arabidopsis thaliana (Mouse-ear cress).